We begin with the raw amino-acid sequence, 253 residues long: Precorrin-4 C(11)-methyltransferase (253 aa).

The protein belongs to the precorrin methyltransferase family.

The enzyme catalyses precorrin-4 + S-adenosyl-L-methionine = precorrin-5 + S-adenosyl-L-homocysteine. It functions in the pathway cofactor biosynthesis; adenosylcobalamin biosynthesis; cob(II)yrinate a,c-diamide from precorrin-2 (aerobic route): step 4/10. Functionally, catalyzes the methylation of C-11 in precorrin-4 to form precorrin-5. The polypeptide is Precorrin-4 C(11)-methyltransferase (cobM) (Sinorhizobium sp).